A 172-amino-acid chain; its full sequence is Interferon tau-3 (172 aa).

Disulfide bonds link Cys-1–Cys-99 and Cys-29–Cys-139. Asn-78 is a glycosylation site (N-linked (GlcNAc...) asparagine).

It belongs to the alpha/beta interferon family. IFN-alphaII subfamily. As to expression, constitutively and exclusively expressed in the mononuclear cells of the extraembryonic trophectoderm.

The protein resides in the secreted. Paracrine hormone primarily responsible for maternal recognition of pregnancy. Interacts with endometrial receptors, probably type I interferon receptors, and blocks estrogen receptor expression, preventing the estrogen-induced increase in oxytocin receptor expression in the endometrium. This results in the suppression of the pulsatile endometrial release of the luteolytic hormone prostaglandin F2-alpha, hindering the regression of the corpus luteum (luteolysis) and therefore a return to ovarian cyclicity. This, and a possible direct effect of IFN-tau on prostaglandin synthesis, leads in turn to continued ovarian progesterone secretion, which stimulates the secretion by the endometrium of the nutrients required for the growth of the conceptus. In summary, displays particularly high antiviral and antiproliferative potency concurrently with particular weak cytotoxicity, high antiluteolytic activity and immunomodulatory properties. In contrast with other IFNs, IFN-tau is not virally inducible. This chain is Interferon tau-3 (IFNT3), found in Bos taurus (Bovine).